The sequence spans 430 residues: Elongation factor Tu (430 aa).

Residues 13–220 (RPHLNIGTIG…ACDKYIALPE (208 aa)) enclose the tr-type G domain. The tract at residues 22-29 (GHVDHGKT) is G1. 22–29 (GHVDHGKT) serves as a coordination point for GTP. A Mg(2+)-binding site is contributed by T29. The segment at 66-70 (GITIS) is G2. The tract at residues 87–90 (DCPG) is G3. GTP is bound by residues 87–91 (DCPGH) and 142–145 (NKCD). The tract at residues 142–145 (NKCD) is G4. A G5 region spans residues 188-190 (SAL).

The protein belongs to the TRAFAC class translation factor GTPase superfamily. Classic translation factor GTPase family. EF-Tu/EF-1A subfamily. Monomer.

The protein localises to the cytoplasm. It carries out the reaction GTP + H2O = GDP + phosphate + H(+). GTP hydrolase that promotes the GTP-dependent binding of aminoacyl-tRNA to the A-site of ribosomes during protein biosynthesis. The sequence is that of Elongation factor Tu from Neorickettsia sennetsu (strain ATCC VR-367 / Miyayama) (Ehrlichia sennetsu).